Here is a 105-residue protein sequence, read N- to C-terminus: Small ribosomal subunit protein eS24 (105 aa).

The protein belongs to the eukaryotic ribosomal protein eS24 family.

The chain is Small ribosomal subunit protein eS24 from Haloquadratum walsbyi (strain DSM 16790 / HBSQ001).